A 405-amino-acid polypeptide reads, in one-letter code: Glycosylated lysosomal membrane protein A (405 aa).

The signal sequence occupies residues 1–25 (MGCTRGWRLLLLLGLVCVGALQGRG). Topologically, residues 26–365 (QEESREVSLQ…YGEPPRDSFS (340 aa)) are lumenal. 15 N-linked (GlcNAc...) asparagine glycosylation sites follow: asparagine 55, asparagine 86, asparagine 125, asparagine 129, asparagine 143, asparagine 153, asparagine 157, asparagine 164, asparagine 169, asparagine 179, asparagine 206, asparagine 222, asparagine 267, asparagine 304, and asparagine 331. The chain crosses the membrane as a helical span at residues 366 to 386 (ILVICIMAVALGTPLLLLIVG). At 387–405 (TLVVTALRHKVYSNYEPIN) the chain is on the cytoplasmic side. Residues 401–405 (YEPIN) carry the Lysosomal targeting motif motif.

It belongs to the GLMP family. In terms of assembly, interacts (via lumenal domain) with lysosomal protein MFSD1; the interaction starts while both proteins are still in the endoplasmic reticulum and is required for stabilization of MFSD1 in lysosomes but has no direct effect on its targeting to lysosomes or transporter activity.

Its subcellular location is the lysosome membrane. Its function is as follows. Required to protect lysosomal transporter MFSD1 from lysosomal proteolysis and for MFSD1 lysosomal localization. The protein is Glycosylated lysosomal membrane protein A (glmp-a) of Xenopus laevis (African clawed frog).